Reading from the N-terminus, the 153-residue chain is Aspartate carbamoyltransferase regulatory chain (153 aa).

Residues Cys-109, Cys-114, Cys-138, and Cys-141 each contribute to the Zn(2+) site.

The protein belongs to the PyrI family. As to quaternary structure, contains catalytic and regulatory chains. Zn(2+) is required as a cofactor.

Involved in allosteric regulation of aspartate carbamoyltransferase. The sequence is that of Aspartate carbamoyltransferase regulatory chain from Escherichia coli (strain ATCC 8739 / DSM 1576 / NBRC 3972 / NCIMB 8545 / WDCM 00012 / Crooks).